A 249-amino-acid chain; its full sequence is Pyridoxine 5'-phosphate synthase (249 aa).

Asn7 is a 3-amino-2-oxopropyl phosphate binding site. A 1-deoxy-D-xylulose 5-phosphate-binding site is contributed by 9-10 (DH). Arg18 contributes to the 3-amino-2-oxopropyl phosphate binding site. His43 functions as the Proton acceptor in the catalytic mechanism. 1-deoxy-D-xylulose 5-phosphate is bound by residues Arg45 and His50. Residue Glu70 is the Proton acceptor of the active site. Residue Thr100 coordinates 1-deoxy-D-xylulose 5-phosphate. His198 functions as the Proton donor in the catalytic mechanism. 3-amino-2-oxopropyl phosphate is bound by residues Ala199 and 220 to 221 (GH).

Belongs to the PNP synthase family. Homooctamer; tetramer of dimers.

The protein localises to the cytoplasm. The enzyme catalyses 3-amino-2-oxopropyl phosphate + 1-deoxy-D-xylulose 5-phosphate = pyridoxine 5'-phosphate + phosphate + 2 H2O + H(+). Its pathway is cofactor biosynthesis; pyridoxine 5'-phosphate biosynthesis; pyridoxine 5'-phosphate from D-erythrose 4-phosphate: step 5/5. In terms of biological role, catalyzes the complicated ring closure reaction between the two acyclic compounds 1-deoxy-D-xylulose-5-phosphate (DXP) and 3-amino-2-oxopropyl phosphate (1-amino-acetone-3-phosphate or AAP) to form pyridoxine 5'-phosphate (PNP) and inorganic phosphate. The sequence is that of Pyridoxine 5'-phosphate synthase from Azoarcus sp. (strain BH72).